A 932-amino-acid polypeptide reads, in one-letter code: DNA mismatch repair protein MutS (932 aa).

615–622 contacts ATP; it reads GPNMAGKS.

It belongs to the DNA mismatch repair MutS family.

Functionally, this protein is involved in the repair of mismatches in DNA. It is possible that it carries out the mismatch recognition step. This protein has a weak ATPase activity. This chain is DNA mismatch repair protein MutS, found in Clostridium botulinum (strain 657 / Type Ba4).